A 245-amino-acid chain; its full sequence is Carbohydrate deacetylase (245 aa).

Positions 59 and 125 each coordinate Mg(2+).

It belongs to the YdjC deacetylase family. Homodimer. The cofactor is Mg(2+).

Its function is as follows. Probably catalyzes the deacetylation of acetylated carbohydrates an important step in the degradation of oligosaccharides. The chain is Carbohydrate deacetylase from Listeria monocytogenes serotype 4a (strain HCC23).